Reading from the N-terminus, the 302-residue chain is Light-independent protochlorophyllide reductase iron-sulfur ATP-binding protein (302 aa).

A compositionally biased stretch (polar residues) spans 1–10 (MSTATISPSQ). The tract at residues 1 to 21 (MSTATISPSQIGRGARPDGEG) is disordered. ATP contacts are provided by residues 46–51 (GIGKST) and lysine 75. Serine 50 contributes to the Mg(2+) binding site. Residues cysteine 131 and cysteine 165 each contribute to the [4Fe-4S] cluster site. ATP contacts are provided by residues 216–217 (NR) and 240–242 (PAL).

It belongs to the NifH/BchL/ChlL family. As to quaternary structure, homodimer. Protochlorophyllide reductase is composed of three subunits; BchL, BchN and BchB. It depends on [4Fe-4S] cluster as a cofactor.

It carries out the reaction chlorophyllide a + oxidized 2[4Fe-4S]-[ferredoxin] + 2 ADP + 2 phosphate = protochlorophyllide a + reduced 2[4Fe-4S]-[ferredoxin] + 2 ATP + 2 H2O. Its pathway is porphyrin-containing compound metabolism; bacteriochlorophyll biosynthesis (light-independent). In terms of biological role, component of the dark-operative protochlorophyllide reductase (DPOR) that uses Mg-ATP and reduced ferredoxin to reduce ring D of protochlorophyllide (Pchlide) to form chlorophyllide a (Chlide). This reaction is light-independent. The L component serves as a unique electron donor to the NB-component of the complex, and binds Mg-ATP. This chain is Light-independent protochlorophyllide reductase iron-sulfur ATP-binding protein, found in Rubrivivax gelatinosus (strain NBRC 100245 / IL144).